The following is a 381-amino-acid chain: Beta-lactamase (381 aa).

The N-terminal stretch at 1–20 (MMRKSLCCALLLGISCSALA) is a signal peptide. The active-site Acyl-ester intermediate is Ser84. Catalysis depends on Tyr170, which acts as the Proton acceptor. A substrate-binding site is contributed by 335–337 (KTG).

The protein belongs to the class-C beta-lactamase family.

It is found in the periplasm. The catalysed reaction is a beta-lactam + H2O = a substituted beta-amino acid. In terms of biological role, this protein is a serine beta-lactamase with a substrate specificity for cephalosporins. The chain is Beta-lactamase (ampC) from Enterobacter cloacae.